The following is an 80-amino-acid chain: Small ribosomal subunit protein uS17 (80 aa).

This sequence belongs to the universal ribosomal protein uS17 family. As to quaternary structure, part of the 30S ribosomal subunit.

Functionally, one of the primary rRNA binding proteins, it binds specifically to the 5'-end of 16S ribosomal RNA. The sequence is that of Small ribosomal subunit protein uS17 from Chelativorans sp. (strain BNC1).